The primary structure comprises 969 residues: Putative zinc protease mug138 (969 aa).

His-68 is a Zn(2+) binding site. Glu-71 acts as the Proton acceptor in catalysis. His-72 and Glu-149 together coordinate Zn(2+).

Belongs to the peptidase M16 family.

The protein resides in the cytoplasm. In terms of biological role, has a role in meiosis. The sequence is that of Putative zinc protease mug138 (mug138) from Schizosaccharomyces pombe (strain 972 / ATCC 24843) (Fission yeast).